The chain runs to 142 residues: Large ribosomal subunit protein uL13 (142 aa).

This sequence belongs to the universal ribosomal protein uL13 family. As to quaternary structure, part of the 50S ribosomal subunit.

In terms of biological role, this protein is one of the early assembly proteins of the 50S ribosomal subunit, although it is not seen to bind rRNA by itself. It is important during the early stages of 50S assembly. The sequence is that of Large ribosomal subunit protein uL13 from Cronobacter sakazakii (strain ATCC BAA-894) (Enterobacter sakazakii).